Here is a 407-residue protein sequence, read N- to C-terminus: 1-deoxy-D-xylulose 5-phosphate reductoisomerase (407 aa).

NADPH is bound by residues Thr-25, Gly-26, Ser-27, Ile-28, Asn-53, and Asn-136. A 1-deoxy-D-xylulose 5-phosphate-binding site is contributed by Lys-137. Glu-138 contacts NADPH. Asp-162 lines the Mn(2+) pocket. The 1-deoxy-D-xylulose 5-phosphate site is built by Ser-163, Glu-164, Ser-188, and His-211. Glu-164 is a Mn(2+) binding site. An NADPH-binding site is contributed by Gly-217. Positions 224, 229, 230, and 233 each coordinate 1-deoxy-D-xylulose 5-phosphate. Residue Glu-233 participates in Mn(2+) binding.

The protein belongs to the DXR family. Mg(2+) serves as cofactor. Mn(2+) is required as a cofactor.

The enzyme catalyses 2-C-methyl-D-erythritol 4-phosphate + NADP(+) = 1-deoxy-D-xylulose 5-phosphate + NADPH + H(+). Its pathway is isoprenoid biosynthesis; isopentenyl diphosphate biosynthesis via DXP pathway; isopentenyl diphosphate from 1-deoxy-D-xylulose 5-phosphate: step 1/6. Functionally, catalyzes the NADPH-dependent rearrangement and reduction of 1-deoxy-D-xylulose-5-phosphate (DXP) to 2-C-methyl-D-erythritol 4-phosphate (MEP). In Afipia carboxidovorans (strain ATCC 49405 / DSM 1227 / KCTC 32145 / OM5) (Oligotropha carboxidovorans), this protein is 1-deoxy-D-xylulose 5-phosphate reductoisomerase.